The primary structure comprises 215 residues: S-crystallin 2 (215 aa).

Positions 2-80 (PSYTLHYFNH…YLAREFGFHG (79 aa)) constitute a GST N-terminal domain. Residues 82–215 (NNLDMARVDF…YLKSRSSTDF (134 aa)) form the GST C-terminal domain.

Belongs to the GST superfamily. Lens.

Its function is as follows. S-crystallins are structural components of squids and octopi eye lens. Contains relatively little GST activity (1/1000 of that of mammalian GST enzyme). The polypeptide is S-crystallin 2 (OCTS2) (Octopus vulgaris (Common octopus)).